The chain runs to 300 residues: Shikimate kinase, chloroplastic (300 aa).

The transit peptide at 1–65 directs the protein to the chloroplast; that stretch reads MEARVSQSLQ…SDRRVQLKVS (65 aa). An ATP-binding site is contributed by 111–118; that stretch reads GMMGCGKT. Residue Thr118 coordinates Mg(2+). Positions 136, 161, and 183 each coordinate substrate. Residue Arg222 coordinates ATP.

The protein belongs to the shikimate kinase family. The cofactor is Mg(2+).

The protein localises to the plastid. It localises to the chloroplast. The catalysed reaction is shikimate + ATP = 3-phosphoshikimate + ADP + H(+). The protein operates within metabolic intermediate biosynthesis; chorismate biosynthesis; chorismate from D-erythrose 4-phosphate and phosphoenolpyruvate: step 5/7. Catalyzes the specific phosphorylation of the 3-hydroxyl group of shikimic acid using ATP as a cosubstrate. In Solanum lycopersicum (Tomato), this protein is Shikimate kinase, chloroplastic (SK).